The following is a 1208-amino-acid chain: Neural cell adhesion molecule L1-like protein (1208 aa).

Residues Met1–Ala24 form the signal peptide. Residues Ile25 to Trp1082 are Extracellular-facing. 2 Ig-like C2-type domains span residues Pro35 to Glu124 and Pro128 to Thr223. Intrachain disulfides connect Cys57/Cys109 and Cys153/Cys204. Residues Lys231 and Asn299 are each glycosylated (N-linked (GlcNAc...) asparagine). 4 Ig-like C2-type domains span residues Pro235 to Glu328, Pro331 to Asp417, Pro423 to Asp510, and Thr515 to Thr607. Cystine bridges form between Cys262/Cys310, Cys352/Cys401, Cys445/Cys494, and Cys536/Cys591. 2 N-linked (GlcNAc...) asparagine glycosylation sites follow: Asn476 and Asn482. The short motif at Asp555–Ala558 is the DGEA element. N-linked (GlcNAc...) asparagine glycans are attached at residues Asn562 and Asn580. 4 consecutive Fibronectin type-III domains span residues Pro614 to Ala709, Asn714 to Asp807, Pro809 to Gly914, and Gln918 to Gly1015. Residues Gly693–Gln716 form a disordered region. N-linked (GlcNAc...) asparagine glycans are attached at residues Asn767, Asn822, Asn945, and Asn1026. A helical transmembrane segment spans residues Phe1083–Val1103. The Cytoplasmic segment spans residues Lys1104 to Ala1208. Residues Glu1131–Ser1163 are disordered. Phosphoserine occurs at positions 1147, 1160, and 1180. Residues Arg1149–Ala1161 show a composition bias toward polar residues. Positions Phe1181–Tyr1185 match the FIG[AQ]Y motif. Positions Lys1189–Ala1208 are disordered. The span at Val1194–Ala1208 shows a compositional bias: polar residues.

It belongs to the immunoglobulin superfamily. L1/neurofascin/NgCAM family. As to quaternary structure, may interact with L1CAM. May interact with ITGB1/ITGA1 heterodimer and ITGB1/ITGA2 heterodimer as well as with ANK3. In terms of processing, cleavage by metalloprotease ADAM8 in the extracellular part generates 2 soluble forms (125 kDa and 165 kDa) in vitro and is inhibited by metalloprotease inhibitors. Cleaved by BACE1. Post-translationally, N-glycosylated. Contains N-linked oligosaccharides with a sulfated carbohydrate structure type HNK-1 (SO4-3-GlcUABeta1,3GalBeta1,4GlcNAc). O-glycosylated. As to expression, expressed in the fetal and adult brain as well as in Schwann cell culture. Also detected in adult peripheral tissues.

It is found in the cell membrane. Its subcellular location is the secreted. The protein localises to the extracellular space. The protein resides in the extracellular matrix. In terms of biological role, extracellular matrix and cell adhesion protein that plays a role in nervous system development and in synaptic plasticity. Both soluble and membranous forms promote neurite outgrowth of cerebellar and hippocampal neurons and suppress neuronal cell death. Plays a role in neuronal positioning of pyramidal neurons and in regulation of both the number of interneurons and the efficacy of GABAergic synapses. May play a role in regulating cell migration in nerve regeneration and cortical development. Potentiates integrin-dependent cell migration towards extracellular matrix proteins. Recruits ANK3 to the plasma membrane. This Homo sapiens (Human) protein is Neural cell adhesion molecule L1-like protein (CHL1).